We begin with the raw amino-acid sequence, 307 residues long: Nitric oxide synthase-interacting protein homolog (307 aa).

The disordered stretch occupies residues 120-159 (PAMTPAHSSAAASEKPSTSSAAAAASSESSSASSISNMTN). Residues 127–155 (SSAAASEKPSTSSAAAAASSESSSASSIS) show a composition bias toward low complexity.

Belongs to the NOSIP family.

The protein localises to the cytoplasm. It is found in the nucleus. In terms of biological role, negatively regulates nitric oxide production by inducing nitric oxide synthase translocation to actin cytoskeleton and inhibiting its enzymatic activity. This chain is Nitric oxide synthase-interacting protein homolog, found in Drosophila melanogaster (Fruit fly).